A 367-amino-acid polypeptide reads, in one-letter code: Flagellar P-ring protein (367 aa).

A signal peptide spans 1-24 (MLRPIITLLCLTLMLCTAAGPAGA).

Belongs to the FlgI family. The basal body constitutes a major portion of the flagellar organelle and consists of four rings (L,P,S, and M) mounted on a central rod.

Its subcellular location is the periplasm. The protein localises to the bacterial flagellum basal body. Its function is as follows. Assembles around the rod to form the L-ring and probably protects the motor/basal body from shearing forces during rotation. The sequence is that of Flagellar P-ring protein from Syntrophotalea carbinolica (strain DSM 2380 / NBRC 103641 / GraBd1) (Pelobacter carbinolicus).